We begin with the raw amino-acid sequence, 225 residues long: Uracil-DNA glycosylase (225 aa).

Catalysis depends on Asp-65, which acts as the Proton acceptor.

The protein belongs to the uracil-DNA glycosylase (UDG) superfamily. UNG family.

Its subcellular location is the cytoplasm. It catalyses the reaction Hydrolyzes single-stranded DNA or mismatched double-stranded DNA and polynucleotides, releasing free uracil.. Its function is as follows. Excises uracil residues from the DNA which can arise as a result of misincorporation of dUMP residues by DNA polymerase or due to deamination of cytosine. The polypeptide is Uracil-DNA glycosylase (Bacillus cereus (strain ZK / E33L)).